A 514-amino-acid chain; its full sequence is Thymus-specific serine protease (514 aa).

The N-terminal stretch at 1–24 (MAVWLAQWLGPLLLVSLWGLLAPA) is a signal peptide. N-linked (GlcNAc...) asparagine glycans are attached at residues Asn70 and Asn172. The active-site Charge relay system is the Ser185. Residue Asn321 is glycosylated (N-linked (GlcNAc...) asparagine). Catalysis depends on charge relay system residues Asp447 and His472.

This sequence belongs to the peptidase S28 family. As to expression, expressed predominantly in cortical thymic epithelial cells.

The protein resides in the cytoplasmic vesicle. Its function is as follows. Protease that may play a role in T-cell development. The protein is Thymus-specific serine protease (PRSS16) of Homo sapiens (Human).